Consider the following 232-residue polypeptide: Ubiquinone biosynthesis O-methyltransferase (232 aa).

The S-adenosyl-L-methionine site is built by arginine 36, glycine 55, aspartate 76, and methionine 120.

Belongs to the methyltransferase superfamily. UbiG/COQ3 family.

The catalysed reaction is a 3-demethylubiquinol + S-adenosyl-L-methionine = a ubiquinol + S-adenosyl-L-homocysteine + H(+). It catalyses the reaction a 3-(all-trans-polyprenyl)benzene-1,2-diol + S-adenosyl-L-methionine = a 2-methoxy-6-(all-trans-polyprenyl)phenol + S-adenosyl-L-homocysteine + H(+). It participates in cofactor biosynthesis; ubiquinone biosynthesis. In terms of biological role, O-methyltransferase that catalyzes the 2 O-methylation steps in the ubiquinone biosynthetic pathway. In Burkholderia ambifaria (strain MC40-6), this protein is Ubiquinone biosynthesis O-methyltransferase.